A 118-amino-acid polypeptide reads, in one-letter code: Ribosome-binding factor A (118 aa).

This sequence belongs to the RbfA family. In terms of assembly, monomer. Binds 30S ribosomal subunits, but not 50S ribosomal subunits or 70S ribosomes.

It is found in the cytoplasm. In terms of biological role, one of several proteins that assist in the late maturation steps of the functional core of the 30S ribosomal subunit. Associates with free 30S ribosomal subunits (but not with 30S subunits that are part of 70S ribosomes or polysomes). Required for efficient processing of 16S rRNA. May interact with the 5'-terminal helix region of 16S rRNA. The protein is Ribosome-binding factor A of Latilactobacillus sakei subsp. sakei (strain 23K) (Lactobacillus sakei subsp. sakei).